Consider the following 235-residue polypeptide: RNA pyrophosphohydrolase (235 aa).

One can recognise a Nudix hydrolase domain in the interval 6–149; that stretch reads GFRPNVGIIL…KREVYQLALS (144 aa). A Nudix box motif is present at residues 38–59; sequence GGIKYGETPEQAMFRELHEEVG. The interval 161–235 is disordered; the sequence is APLSPYGRGG…PDDTAPKDNS (75 aa). A compositionally biased stretch (basic and acidic residues) spans 171–196; the sequence is QHRERDGRDARDSRERSSDQGGRNEQ. Residues 203 to 220 are compositionally biased toward low complexity; it reads TVTTTTVIVETVSVSAPT.

This sequence belongs to the Nudix hydrolase family. RppH subfamily. A divalent metal cation serves as cofactor.

Accelerates the degradation of transcripts by removing pyrophosphate from the 5'-end of triphosphorylated RNA, leading to a more labile monophosphorylated state that can stimulate subsequent ribonuclease cleavage. This Ralstonia pickettii (strain 12J) protein is RNA pyrophosphohydrolase.